The sequence spans 52 residues: Alpha-crystallin B chain (52 aa).

It belongs to the small heat shock protein (HSP20) family. In terms of assembly, homodimer. Aggregates with homologous proteins, including alpha-A-crystallin and the small heat shock protein HSPB1, to form large heteromeric complexes.

In terms of biological role, may contribute to the transparency and refractive index of the lens. The chain is Alpha-crystallin B chain (CRYAB) from Trachemys scripta elegans (Red-eared slider turtle).